The following is a 268-amino-acid chain: Zygote formation protein zyg1 (268 aa).

Plays an essential role in zygote formation by inducing sexual cell fusion. Overexpressing cells eventually formed many loose mounds, in which giant multinucleate cells were surrounded by normal-sized cells. The polypeptide is Zygote formation protein zyg1 (zyg1) (Dictyostelium mucoroides (Slime mold)).